We begin with the raw amino-acid sequence, 83 residues long: Cytochrome b559 subunit alpha (83 aa).

A helical transmembrane segment spans residues 21 to 35 (VIHSITIPSLFIAGW). Histidine 23 contacts heme.

This sequence belongs to the PsbE/PsbF family. Heterodimer of an alpha subunit and a beta subunit. PSII is composed of 1 copy each of membrane proteins PsbA, PsbB, PsbC, PsbD, PsbE, PsbF, PsbH, PsbI, PsbJ, PsbK, PsbL, PsbM, PsbT, PsbX, PsbY, PsbZ, Psb30/Ycf12, at least 3 peripheral proteins of the oxygen-evolving complex and a large number of cofactors. It forms dimeric complexes. Heme b serves as cofactor.

The protein localises to the plastid. Its subcellular location is the chloroplast thylakoid membrane. Its function is as follows. This b-type cytochrome is tightly associated with the reaction center of photosystem II (PSII). PSII is a light-driven water:plastoquinone oxidoreductase that uses light energy to abstract electrons from H(2)O, generating O(2) and a proton gradient subsequently used for ATP formation. It consists of a core antenna complex that captures photons, and an electron transfer chain that converts photonic excitation into a charge separation. This Agrostis stolonifera (Creeping bentgrass) protein is Cytochrome b559 subunit alpha.